Consider the following 275-residue polypeptide: 2,3,4,5-tetrahydropyridine-2,6-dicarboxylate N-succinyltransferase (275 aa).

This sequence belongs to the transferase hexapeptide repeat family.

The protein localises to the cytoplasm. The enzyme catalyses (S)-2,3,4,5-tetrahydrodipicolinate + succinyl-CoA + H2O = (S)-2-succinylamino-6-oxoheptanedioate + CoA. It participates in amino-acid biosynthesis; L-lysine biosynthesis via DAP pathway; LL-2,6-diaminopimelate from (S)-tetrahydrodipicolinate (succinylase route): step 1/3. This is 2,3,4,5-tetrahydropyridine-2,6-dicarboxylate N-succinyltransferase from Paraburkholderia phytofirmans (strain DSM 17436 / LMG 22146 / PsJN) (Burkholderia phytofirmans).